A 295-amino-acid polypeptide reads, in one-letter code: UDP-N-acetylenolpyruvoylglucosamine reductase (295 aa).

One can recognise an FAD-binding PCMH-type domain in the interval 23–188 (KVGGPADFLA…ISAKFALKPG (166 aa)). The active site involves R167. The active-site Proton donor is the S217. E287 is a catalytic residue.

This sequence belongs to the MurB family. FAD serves as cofactor.

It localises to the cytoplasm. The catalysed reaction is UDP-N-acetyl-alpha-D-muramate + NADP(+) = UDP-N-acetyl-3-O-(1-carboxyvinyl)-alpha-D-glucosamine + NADPH + H(+). Its pathway is cell wall biogenesis; peptidoglycan biosynthesis. Cell wall formation. This chain is UDP-N-acetylenolpyruvoylglucosamine reductase, found in Streptococcus pyogenes serotype M6 (strain ATCC BAA-946 / MGAS10394).